A 471-amino-acid chain; its full sequence is Reticulon-2 (471 aa).

Disordered regions lie at residues 1–137, 153–181, and 205–234; these read MGQV…ERPL, SAGS…ASEA, and QLSP…DDEP. Over residues 14–25 the composition is skewed to low complexity; that stretch reads APSTASSTPDST. Positions 32-43 are enriched in basic and acidic residues; the sequence is SDFRELHTAREF. S44 carries the post-translational modification Phosphoserine. Composition is skewed to polar residues over residues 100–118 and 159–168; these read PQQS…LSQS and DSATSSSTPL. The segment covering 169-181 has biased composition (acidic residues); it reads ENEEPDGLEASEA. Positions 205-229 are enriched in polar residues; that stretch reads QLSPSSGTPQAHTPSPQRSQDSNSG. Phosphoserine is present on residues S226 and S228. The region spanning 272 to 471 is the Reticulon domain; that stretch reads VADLLYWKDT…SVSGSKAKAE (200 aa). The next 2 membrane-spanning stretches (helical) occupy residues 295–315 and 390–410; these read LLCL…LLGL and LLFY…LVIL.

In terms of assembly, interacts with SPAST. Interacts with BACE1. Interacts (via first transmembrane domain) with ARL6IP5/GTRAP3-18. Interacts (via N-terminus) with SLC1A1/EAAC1; the interaction promotes cell surface expression of SLC1A1. Detected in skeletal and cardiac muscle (at protein level). Expressed predominantly in neural and muscular tissues.

It is found in the endoplasmic reticulum membrane. Its subcellular location is the sarcoplasmic reticulum membrane. The protein resides in the cell membrane. It localises to the sarcolemma. The protein localises to the T-tubule. It is found in the cytoplasm. Its subcellular location is the myofibril. The protein resides in the sarcomere. It localises to the z line. The protein localises to the cytoskeleton. Inhibits amyloid precursor protein processing, probably by blocking BACE1 activity. Enhances trafficking of the glutamate transporter SLC1A1/EAAC1 from the endoplasmic reticulum to the cell surface. Plays a role in the translocation of SLC2A4/GLUT4 from intracellular membranes to the cell membrane which facilitates the uptake of glucose into the cell. The protein is Reticulon-2 of Mus musculus (Mouse).